The following is a 101-amino-acid chain: Large ribosomal subunit protein uL23 (101 aa).

It belongs to the universal ribosomal protein uL23 family. Part of the 50S ribosomal subunit. Contacts protein L29, and trigger factor when it is bound to the ribosome.

In terms of biological role, one of the early assembly proteins it binds 23S rRNA. One of the proteins that surrounds the polypeptide exit tunnel on the outside of the ribosome. Forms the main docking site for trigger factor binding to the ribosome. This Mannheimia succiniciproducens (strain KCTC 0769BP / MBEL55E) protein is Large ribosomal subunit protein uL23.